A 202-amino-acid chain; its full sequence is Glycerol-3-phosphate acyltransferase (202 aa).

5 helical membrane-spanning segments follow: residues 3–23 (NLII…LILA), 87–107 (LLWS…YLLF), 118–138 (GAMI…WVVI), 144–164 (ISSL…FIFN), and 167–187 (LEIH…YKHL).

Belongs to the PlsY family. As to quaternary structure, probably interacts with PlsX.

The protein resides in the cell inner membrane. The enzyme catalyses an acyl phosphate + sn-glycerol 3-phosphate = a 1-acyl-sn-glycero-3-phosphate + phosphate. Its pathway is lipid metabolism; phospholipid metabolism. Its function is as follows. Catalyzes the transfer of an acyl group from acyl-phosphate (acyl-PO(4)) to glycerol-3-phosphate (G3P) to form lysophosphatidic acid (LPA). This enzyme utilizes acyl-phosphate as fatty acyl donor, but not acyl-CoA or acyl-ACP. The chain is Glycerol-3-phosphate acyltransferase from Campylobacter jejuni subsp. jejuni serotype O:2 (strain ATCC 700819 / NCTC 11168).